Consider the following 144-residue polypeptide: MIGLIQRVKWAKVEVEGQTVGEITQGLLVLLGVEQGDDQAKADKLLEKVLNYRVFSDEQGKMNLNVQQAGGSLLVVSQFTLAADTNKGLRPSFSRGAAPQEANALYEYFHQQAARKIHTQTGQFAADMQVSLQNDGPVTFWLQI.

The Gly-cisPro motif, important for rejection of L-amino acids signature appears at 136-137; sequence GP.

It belongs to the DTD family. In terms of assembly, homodimer.

The protein resides in the cytoplasm. The catalysed reaction is glycyl-tRNA(Ala) + H2O = tRNA(Ala) + glycine + H(+). It carries out the reaction a D-aminoacyl-tRNA + H2O = a tRNA + a D-alpha-amino acid + H(+). Functionally, an aminoacyl-tRNA editing enzyme that deacylates mischarged D-aminoacyl-tRNAs. Also deacylates mischarged glycyl-tRNA(Ala), protecting cells against glycine mischarging by AlaRS. Acts via tRNA-based rather than protein-based catalysis; rejects L-amino acids rather than detecting D-amino acids in the active site. By recycling D-aminoacyl-tRNA to D-amino acids and free tRNA molecules, this enzyme counteracts the toxicity associated with the formation of D-aminoacyl-tRNA entities in vivo and helps enforce protein L-homochirality. The protein is D-aminoacyl-tRNA deacylase of Actinobacillus pleuropneumoniae serotype 5b (strain L20).